The chain runs to 136 residues: Large ribosomal subunit protein uL16 (136 aa).

Belongs to the universal ribosomal protein uL16 family. As to quaternary structure, part of the 50S ribosomal subunit.

In terms of biological role, binds 23S rRNA and is also seen to make contacts with the A and possibly P site tRNAs. The chain is Large ribosomal subunit protein uL16 from Alteromonas mediterranea (strain DSM 17117 / CIP 110805 / LMG 28347 / Deep ecotype).